Reading from the N-terminus, the 393-residue chain is S-adenosylmethionine synthase 2 (393 aa).

Mg(2+) is bound at residue E9. H15 serves as a coordination point for ATP. E43 provides a ligand contact to K(+). L-methionine is bound by residues E56 and Q99. Residues 167–169 (DGK), 235–238 (SGRF), D246, 252–253 (RK), A269, K273, and K277 contribute to the ATP site. D246 lines the L-methionine pocket. L-methionine is bound at residue K277.

It belongs to the AdoMet synthase family. Homotetramer. Mn(2+) is required as a cofactor. It depends on Mg(2+) as a cofactor. The cofactor is Co(2+). Requires K(+) as cofactor.

The protein resides in the cytoplasm. The catalysed reaction is L-methionine + ATP + H2O = S-adenosyl-L-methionine + phosphate + diphosphate. It participates in amino-acid biosynthesis; S-adenosyl-L-methionine biosynthesis; S-adenosyl-L-methionine from L-methionine: step 1/1. Catalyzes the formation of S-adenosylmethionine from methionine and ATP. The reaction comprises two steps that are both catalyzed by the same enzyme: formation of S-adenosylmethionine (AdoMet) and triphosphate, and subsequent hydrolysis of the triphosphate. The chain is S-adenosylmethionine synthase 2 (METK2) from Vitis vinifera (Grape).